A 196-amino-acid chain; its full sequence is Dephospho-CoA kinase (196 aa).

Positions isoleucine 5–leucine 196 constitute a DPCK domain. Alanine 13–threonine 18 serves as a coordination point for ATP.

This sequence belongs to the CoaE family.

The protein resides in the cytoplasm. The enzyme catalyses 3'-dephospho-CoA + ATP = ADP + CoA + H(+). Its pathway is cofactor biosynthesis; coenzyme A biosynthesis; CoA from (R)-pantothenate: step 5/5. Its function is as follows. Catalyzes the phosphorylation of the 3'-hydroxyl group of dephosphocoenzyme A to form coenzyme A. In Nostoc sp. (strain PCC 7120 / SAG 25.82 / UTEX 2576), this protein is Dephospho-CoA kinase.